Reading from the N-terminus, the 110-residue chain is Nucleoid-associated protein ESA_02800 (110 aa).

The segment at 89-110 (QKEKMASVSSGMQLPPGFKMPF) is disordered.

This sequence belongs to the YbaB/EbfC family. As to quaternary structure, homodimer.

The protein localises to the cytoplasm. It localises to the nucleoid. In terms of biological role, binds to DNA and alters its conformation. May be involved in regulation of gene expression, nucleoid organization and DNA protection. The polypeptide is Nucleoid-associated protein ESA_02800 (Cronobacter sakazakii (strain ATCC BAA-894) (Enterobacter sakazakii)).